The sequence spans 244 residues: 7-cyano-7-deazaguanine synthase (244 aa).

19-29 (FSGGQDSTTCL) contributes to the ATP binding site. Zn(2+) contacts are provided by Cys207, Cys222, Cys225, and Cys228.

It belongs to the QueC family. The cofactor is Zn(2+).

The enzyme catalyses 7-carboxy-7-deazaguanine + NH4(+) + ATP = 7-cyano-7-deazaguanine + ADP + phosphate + H2O + H(+). It functions in the pathway purine metabolism; 7-cyano-7-deazaguanine biosynthesis. Functionally, catalyzes the ATP-dependent conversion of 7-carboxy-7-deazaguanine (CDG) to 7-cyano-7-deazaguanine (preQ(0)). The protein is 7-cyano-7-deazaguanine synthase of Bordetella avium (strain 197N).